Here is a 203-residue protein sequence, read N- to C-terminus: Large ribosomal subunit protein bL25 (203 aa).

This sequence belongs to the bacterial ribosomal protein bL25 family. CTC subfamily. Part of the 50S ribosomal subunit; part of the 5S rRNA/L5/L18/L25 subcomplex. Contacts the 5S rRNA. Binds to the 5S rRNA independently of L5 and L18.

Its function is as follows. This is one of the proteins that binds to the 5S RNA in the ribosome where it forms part of the central protuberance. This chain is Large ribosomal subunit protein bL25, found in Cereibacter sphaeroides (strain ATCC 17029 / ATH 2.4.9) (Rhodobacter sphaeroides).